A 236-amino-acid chain; its full sequence is RNA-binding protein 24 (236 aa).

The RRM domain occupies 11–88; that stretch reads TKIFVGGLPY…RKANVNLAYL (78 aa). Residues 175–199 form a necessary for interaction with EIF4E region; the sequence is QYPYAASPAAAGYVTAGGYGYAVQQ.

As to quaternary structure, interacts with EIF4E; this interaction prevents EIF4E from binding to p53/TP53 mRNA and inhibits the assembly of translation initiation complex. (Microbial infection) Interacts with HCV mature core protein; this interaction, which enhances the interaction of Core with 5'-UTR may favor viral replication over translation. In terms of assembly, (Microbial infection) Interacts with HCV Serine protease/helicase NS3. Expressed in fetal and adult heart and skeletal muscles.

Its subcellular location is the nucleus. It localises to the cytoplasm. In terms of biological role, multifunctional RNA-binding protein involved in the regulation of pre-mRNA splicing, mRNA stability and mRNA translation important for cell fate decision and differentiation. Plays a major role in pre-mRNA alternative splicing regulation. Mediates preferentially muscle-specific exon inclusion in numerous mRNAs important for striated cardiac and skeletal muscle cell differentiation. Binds to intronic splicing enhancer (ISE) composed of stretches of GU-rich motifs localized in flanking intron of exon that will be included by alternative splicing. Involved in embryonic stem cell (ESC) transition to cardiac cell differentiation by promoting pre-mRNA alternative splicing events of several pluripotency and/or differentiation genes. Plays a role in the regulation of mRNA stability. Binds to 3'-untranslated region (UTR) AU-rich elements in target transcripts, such as CDKN1A and MYOG, leading to maintain their stabilities. Involved in myogenic differentiation by regulating MYOG levels. Binds to multiple regions in the mRNA 3'-UTR of TP63 isoform 2, hence inducing its destabilization. Also promotes the destabilization of the CHRM2 mRNA via its binding to a region in the coding sequence. Plays a role in the regulation of mRNA translation. Mediates repression of p53/TP53 mRNA translation through its binding to U-rich element in the 3'-UTR, hence preventing EIF4E from binding to p53/TP53 mRNA and translation initiation. Binds to a huge amount of mRNAs. Required for embryonic heart development, sarcomer and M-band formation in striated muscles. Together with RBM20, promotes the expression of short isoforms of PDLIM5/ENH in cardiomyocytes. (Microbial infection) Promotes hepatitis C virus (HCV) replication over translation through the inhibition of viral protein expression. Decreases viral translation by linking viral 5'- and 3'-UTRs, blocking 80S ribosome assembly on the viral IRES and enhancing the interaction of the mature core protein and 5'-UTR. The sequence is that of RNA-binding protein 24 from Homo sapiens (Human).